The primary structure comprises 543 residues: MTVTAVNVLISLGVAALAVAVWKAIVMVIQIATSPLRNIPGPPNSNWVYGNLKEIFATENSVLHEGWVAKYGNTIKYKGWLSRNRLFTVDTRALNYILSHSNEYQKPALARYNLGEVLGEGLLIVEGEQHRQQRRIMNPAFGPAQIRELTEIFVEKAQKLCLFWRNEISKSGEPARIDVLNGLSKMTLDVIGLAGFNYEFDSLNIDGKPNELNQAFSVMFRSLEGFAIVFPLLKALIPPLRLIPDGRSRRIAKARKVMRRMGMELITKKKAEILRAAAGEKEKDNLQSRDLLTLLIKANLATDLPESHRLSDEDVLAQVPTFLVAGHETTSNATAWCLYALTQAPEVQQKLREELWSIPTENPSMDELNELPYLEAVVRETMRVHAPVPSTIRVAMTDDVIPLDTPFVDVHGQVQDSIRVKKGDPIFIPILVINRSKALWGEDAFEFKPERWESVPDAVQHIPGVWANQMSFLGGPRACIGYRFSLIEMKALIFALVRAFEFELAVPPEEIMKKSTAVQRPLVRSEMDKGCQLPLLIKPYHTV.

Residues 9-29 (LISLGVAALAVAVWKAIVMVI) form a helical membrane-spanning segment. Asparagine 332 and asparagine 434 each carry an N-linked (GlcNAc...) asparagine glycan. Cysteine 479 contacts heme.

It belongs to the cytochrome P450 family. Heme is required as a cofactor.

Its subcellular location is the membrane. The protein operates within secondary metabolite biosynthesis. In terms of biological role, cytochrome P450 monooxygenase that is able to use carbazole and phenanthrene as substrates for oxidation. In Postia placenta (strain ATCC 44394 / Madison 698-R) (Brown rot fungus), this protein is Cytochrome P450 monooxygenase 205.